Consider the following 343-residue polypeptide: Protein RecA (343 aa).

68 to 75 serves as a coordination point for ATP; it reads GPESSGKT.

Belongs to the RecA family.

The protein localises to the cytoplasm. Functionally, can catalyze the hydrolysis of ATP in the presence of single-stranded DNA, the ATP-dependent uptake of single-stranded DNA by duplex DNA, and the ATP-dependent hybridization of homologous single-stranded DNAs. It interacts with LexA causing its activation and leading to its autocatalytic cleavage. In Syntrophobacter fumaroxidans (strain DSM 10017 / MPOB), this protein is Protein RecA.